Consider the following 376-residue polypeptide: N-acetyldiaminopimelate deacetylase (376 aa).

Residue aspartate 69 is part of the active site. The Proton acceptor role is filled by glutamate 128.

It belongs to the peptidase M20A family. N-acetyldiaminopimelate deacetylase subfamily.

The enzyme catalyses N-acetyl-(2S,6S)-2,6-diaminopimelate + H2O = (2S,6S)-2,6-diaminopimelate + acetate. It functions in the pathway amino-acid biosynthesis; L-lysine biosynthesis via DAP pathway; LL-2,6-diaminopimelate from (S)-tetrahydrodipicolinate (acetylase route): step 3/3. Its function is as follows. Catalyzes the conversion of N-acetyl-diaminopimelate to diaminopimelate and acetate. This chain is N-acetyldiaminopimelate deacetylase, found in Bacillus cereus (strain G9842).